The following is a 192-amino-acid chain: Fe/S biogenesis protein NfuA (192 aa).

Positions 150 and 153 each coordinate [4Fe-4S] cluster.

It belongs to the NfuA family. In terms of assembly, homodimer. The cofactor is [4Fe-4S] cluster.

In terms of biological role, involved in iron-sulfur cluster biogenesis. Binds a 4Fe-4S cluster, can transfer this cluster to apoproteins, and thereby intervenes in the maturation of Fe/S proteins. Could also act as a scaffold/chaperone for damaged Fe/S proteins. This is Fe/S biogenesis protein NfuA from Buchnera aphidicola subsp. Acyrthosiphon pisum (strain APS) (Acyrthosiphon pisum symbiotic bacterium).